Consider the following 162-residue polypeptide: Protein A49 (162 aa).

Belongs to the poxviridae A49 protein family.

The protein is Protein A49 of Homo sapiens (Human).